We begin with the raw amino-acid sequence, 223 residues long: Voltage-dependent calcium channel gamma-1 subunit (223 aa).

The Cytoplasmic portion of the chain corresponds to 1–10; sequence MSQTKTLKVR. Residues 11-29 form a helical membrane-spanning segment; the sequence is VALLCILVGIVLALVAVVT. Residues 30–109 are Extracellular-facing; that stretch reads DHWAVLSPHV…TQKEYSISAA (80 aa). N-linked (GlcNAc...) asparagine glycans are attached at residues Asn-43 and Asn-80. A disulfide bridge links Cys-57 with Cys-81. A helical membrane pass occupies residues 110 to 130; sequence AIAIFSLGFIIVGTLCALLSF. At 131-135 the chain is on the cytoplasmic side; the sequence is RKKRD. The chain crosses the membrane as a helical span at residues 136-156; that stretch reads YLLRPASMFYIFAGLCLSVSA. The Extracellular portion of the chain corresponds to 157 to 180; the sequence is EVMRQSVQRMVDSEHTAWIAHSLA. The helical transmembrane segment at 181–205 threads the bilayer; sequence WSFICACVAAALLLVGGLALLLLAL. The Cytoplasmic portion of the chain corresponds to 206–223; the sequence is PRMPRDPWESCMDAEPEH.

Belongs to the PMP-22/EMP/MP20 family. CACNG subfamily. In terms of assembly, component of a calcium channel complex consisting of a pore-forming alpha subunit (CACNA1S) and the ancillary subunits CACNB1 or CACNB2, CACNG1 and CACNA2D1. The channel complex contains alpha, beta, gamma and delta subunits in a 1:1:1:1 ratio, i.e. it contains either CACNB1 or CACNB2. In terms of processing, N-glycosylated.

It is found in the cell membrane. It localises to the sarcolemma. Functionally, regulatory subunit of the voltage-gated calcium channel that gives rise to L-type calcium currents in skeletal muscle. Regulates channel inactivation kinetics. This is Voltage-dependent calcium channel gamma-1 subunit (CACNG1) from Bos taurus (Bovine).